Here is a 114-residue protein sequence, read N- to C-terminus: Phycoerythrin alpha-1 subunit (114 aa).

Residues Asp52, Ser53, Glu63, Arg64, Cys67, Thr72, Lys74, Ala75, and Lys84 each coordinate (2R,3E)-phycoerythrobilin.

It belongs to the phycoerythrin family. As to quaternary structure, heterotetramer of 2 different alpha chains and 2 identical beta chains which form 2 alpha-beta heterodimers within the heterotetramer. The two alpha-beta heterodimers are rotated to an open configuration in contrast to the closed configuration found in other cryptophyte species due to the insertion of a single amino acid, Asp-65, in a conserved region of the alpha chain. In the open form, the central chromophores are not in physical contact but are separated by a water-filled channel. Contains three phycoerythrobilin chromophores with binding mediated by both the alpha and beta subunits.

It is found in the plastid. The protein resides in the chloroplast thylakoid membrane. Light-harvesting photosynthetic tetrapyrrole chromophore-protein from the phycobiliprotein complex. This chain is Phycoerythrin alpha-1 subunit, found in Hemiselmis andersenii (Cryptophyte alga).